We begin with the raw amino-acid sequence, 121 residues long: Ribosome-binding factor A (121 aa).

The protein belongs to the RbfA family. As to quaternary structure, monomer. Binds 30S ribosomal subunits, but not 50S ribosomal subunits or 70S ribosomes.

The protein resides in the cytoplasm. In terms of biological role, one of several proteins that assist in the late maturation steps of the functional core of the 30S ribosomal subunit. Associates with free 30S ribosomal subunits (but not with 30S subunits that are part of 70S ribosomes or polysomes). Required for efficient processing of 16S rRNA. May interact with the 5'-terminal helix region of 16S rRNA. This chain is Ribosome-binding factor A, found in Heliobacterium modesticaldum (strain ATCC 51547 / Ice1).